The chain runs to 196 residues: Probable GTP-binding protein EngB (196 aa).

One can recognise an EngB-type G domain in the interval serine 22–glutamate 193. Residues glycine 30–serine 37, glycine 57–leucine 61, aspartate 75–glycine 78, threonine 142–aspartate 145, and phenylalanine 172–alanine 174 contribute to the GTP site. 2 residues coordinate Mg(2+): serine 37 and threonine 59.

Belongs to the TRAFAC class TrmE-Era-EngA-EngB-Septin-like GTPase superfamily. EngB GTPase family. Mg(2+) is required as a cofactor.

In terms of biological role, necessary for normal cell division and for the maintenance of normal septation. This is Probable GTP-binding protein EngB from Syntrophus aciditrophicus (strain SB).